A 211-amino-acid polypeptide reads, in one-letter code: Riboflavin kinase (211 aa).

The segment at 1–81 (MKCIDRRLIG…DLLRYFNILS (81 aa)) is H-T-H motif-like. Residues 82 to 211 (IRLSGRVVSG…DRVEIEIYLE (130 aa)) form a riboflavin kinase region. Residue 91–96 (GLGEGA) coordinates CDP. 2 residues coordinate Mg(2+): Thr120 and Asn122. FMN-binding residues include Thr177 and Glu185. 190–193 (FKLR) serves as a coordination point for CDP.

The protein belongs to the archaeal riboflavin kinase family. The cofactor is Mg(2+).

The enzyme catalyses riboflavin + CTP = CDP + FMN + H(+). Its pathway is cofactor biosynthesis; FMN biosynthesis; FMN from riboflavin (CTP route): step 1/1. Catalyzes the CTP-dependent phosphorylation of riboflavin (vitamin B2) to form flavin mononucleotide (FMN). The protein is Riboflavin kinase (ribK) of Pyrobaculum islandicum (strain DSM 4184 / JCM 9189 / GEO3).